Here is a 296-residue protein sequence, read N- to C-terminus: Cutinase est1 (296 aa).

The first 35 residues, 1-35 (MSVTTPRREASLLSRAVAVAAAAAATVALAAPAQA), serve as a signal peptide directing secretion. The tract at residues 36-57 (ANPYERGPNPTESMLEARSGPF) is disordered. Residue tyrosine 95 participates in poly(ethylene terephthalate) binding. Serine 165 serves as the catalytic Nucleophile. Methionine 166 and tryptophan 190 together coordinate poly(ethylene terephthalate). Catalysis depends on charge relay system residues aspartate 211 and histidine 243. Cysteines 276 and 294 form a disulfide.

Belongs to the AB hydrolase superfamily. As to quaternary structure, monomer.

It localises to the secreted. The protein resides in the periplasm. It catalyses the reaction (ethylene terephthalate)(n) + H2O = (ethylene terephthalate)(n-1) + 4-[(2-hydroxyethoxy)carbonyl]benzoate + H(+). The enzyme catalyses a butanoate ester + H2O = an aliphatic alcohol + butanoate + H(+). The catalysed reaction is cutin + H2O = cutin monomers.. Its function is as follows. Catalyzes the hydrolysis of cutin, a polyester that forms the structure of plant cuticle. Shows esterase activity towards p-nitrophenol-linked aliphatic esters (pNP-aliphatic esters). Capable of degrading the plastic poly(ethylene terephthalate) (PET), the most abundant polyester plastic in the world. Can also depolymerize the synthetic polyester poly(epsilon-caprolactone) (PCL). This is Cutinase est1 from Thermobifida alba (Thermomonospora alba).